A 321-amino-acid chain; its full sequence is ATP-dependent 6-phosphofructokinase (321 aa).

Gly-12 contacts ATP. 22–26 (RGVVR) provides a ligand contact to ADP. Residues 73 to 74 (RF) and 103 to 106 (GDGS) each bind ATP. Asp-104 serves as a coordination point for Mg(2+). 127–129 (TID) lines the substrate pocket. The active-site Proton acceptor is Asp-129. ADP is bound at residue Arg-156. Substrate contacts are provided by residues Arg-164 and 171-173 (MGR). ADP-binding positions include 187–189 (GCE), Lys-213, and 215–217 (KRH). Substrate is bound by residues Glu-224, Arg-245, and 251 to 254 (HTQR).

The protein belongs to the phosphofructokinase type A (PFKA) family. ATP-dependent PFK group I subfamily. Prokaryotic clade 'B1' sub-subfamily. As to quaternary structure, homotetramer. Requires Mg(2+) as cofactor.

It is found in the cytoplasm. It catalyses the reaction beta-D-fructose 6-phosphate + ATP = beta-D-fructose 1,6-bisphosphate + ADP + H(+). The protein operates within carbohydrate degradation; glycolysis; D-glyceraldehyde 3-phosphate and glycerone phosphate from D-glucose: step 3/4. Its activity is regulated as follows. Allosterically activated by ADP and other diphosphonucleosides, and allosterically inhibited by phosphoenolpyruvate. Functionally, catalyzes the phosphorylation of D-fructose 6-phosphate to fructose 1,6-bisphosphate by ATP, the first committing step of glycolysis. This Glaesserella parasuis serovar 5 (strain SH0165) (Haemophilus parasuis) protein is ATP-dependent 6-phosphofructokinase.